The primary structure comprises 397 residues: Serpin B10 (397 aa).

The short motif at 74-77 (KKRK) is the Nuclear localization signal element.

The protein belongs to the serpin family. Ov-serpin subfamily.

Its subcellular location is the nucleus. The protein localises to the cytoplasm. Functionally, protease inhibitor that may play a role in the regulation of protease activities during hematopoiesis and apoptosis induced by TNF. May regulate protease activities in the cytoplasm and in the nucleus. The chain is Serpin B10 (SERPINB10) from Plecturocebus moloch (Dusky titi monkey).